The chain runs to 136 residues: Large ribosomal subunit protein uL16 (136 aa).

It belongs to the universal ribosomal protein uL16 family. In terms of assembly, part of the 50S ribosomal subunit.

Its function is as follows. Binds 23S rRNA and is also seen to make contacts with the A and possibly P site tRNAs. This Haemophilus ducreyi (strain 35000HP / ATCC 700724) protein is Large ribosomal subunit protein uL16.